The sequence spans 579 residues: MPKTISVRVTTMDAELEFAIQPSTTGKQLFDQVVKTIGLREVWFFGLQYQDTKGFSTWLKLNKKVTAQDVRKESPLLFKFRAKFYPEDVSEELIQEATQRLFFLQVKEGILNDDIYCPPETAVLLASYAVQAKYADYNKDAHTPGYLSNEKLLPQRVLEQHKLNKEQWEERIQVWHEEHKGMLREDSMMEYLKIAQDLEMYGVNYFSIKNKKGSELWLGVDALGLNIYEQNDKMTPKIGFPWSEIRNISFNDKKFVIKPIDKKAPDFVFYAQRLRINKRILALCMGNHELYMRRRKPDTIEVQQMKAQAKEEKNHKKMERALLEDERKKREQAEKEKEKIEKEKEELMERLRVIEEQTRKAQQELEEQTRKALELEQERKRAQEEAERLERERRLAEEAKSALLQQSESQMKNQEHLATELAELTSKISLLEDAKKKKEDEALEWQTKATMVQEDLEKTKEELKNKVMSSHVTEPVHGENDNDEGDESSAEASAELTSAAAYKDRSEEERMTEAEKNERVQKHLLALTSELANARDETKKTQNDIIHAENVRAGRDKYKTLRQIRSGNTKQRIDEFECM.

The FERM domain occupies Ile-5 to Arg-295. Residues Lys-306–Lys-448 adopt a coiled-coil conformation. Disordered regions lie at residues Gln-308–Glu-341, Glu-376–Ala-418, and Lys-464–Arg-519. The segment covering Glu-376–Lys-400 has biased composition (basic and acidic residues). Over residues Ala-490–Ala-501 the composition is skewed to low complexity. Basic and acidic residues predominate over residues Tyr-502–Arg-519. Positions Asn-517 to Val-551 form a coiled coil.

The protein resides in the cell membrane. The protein localises to the cell junction. Functionally, positively regulates endothelial adherens junction formation and stabilization. Is thereby required for intersegmental vessel luminal membrane formation and stabilization during tubulogenesis in the early stages of development, independent of blood flow dynamics. The sequence is that of Moesin a from Danio rerio (Zebrafish).